The following is a 102-amino-acid chain: Protein Tat (102 aa).

The interval Met-1 to Asn-24 is interaction with human CREBBP. A transactivation region spans residues Met-1–Gly-48. 3 residues coordinate Zn(2+): Cys-22, Cys-25, and Cys-27. Residues Cys-22 to Cys-37 form a cysteine-rich region. Lys-28 bears the N6-acetyllysine; by host PCAF mark. Positions 30, 33, 34, and 37 each coordinate Zn(2+). Residues Phe-38–Gly-48 are core. The disordered stretch occupies residues Gly-48–Gln-102. The short motif at Arg-49 to Gly-57 is the Nuclear localization signal, RNA-binding (TAR), and protein transduction element. Residues Arg-49–Glu-86 form an interaction with the host capping enzyme RNGTT region. N6-acetyllysine; by host EP300 and GCN5L2 is present on residues Lys-50 and Lys-51. Residues Arg-52 and Arg-53 each carry the asymmetric dimethylarginine; by host PRMT6 modification. Positions Ser-62–Pro-77 are enriched in polar residues. A Glycyl lysine isopeptide (Lys-Gly) (interchain with G-Cter in ubiquitin) cross-link involves residue Lys-71. The short motif at Arg-78–Asp-80 is the Cell attachment site element. Positions Gly-83–Glu-96 are enriched in basic and acidic residues.

This sequence belongs to the lentiviruses Tat family. As to quaternary structure, interacts with host CCNT1. Associates with the P-TEFb complex composed at least of Tat, P-TEFb (CDK9 and CCNT1), TAR RNA, RNA Pol II. Recruits the HATs CREBBP, TAF1/TFIID, EP300, PCAF and GCN5L2. Interacts with host KAT5/Tip60; this interaction targets the latter to degradation. Interacts with the host deacetylase SIRT1. Interacts with host capping enzyme RNGTT; this interaction stimulates RNGTT. Binds to host KDR, and to the host integrins ITGAV/ITGB3 and ITGA5/ITGB1. Interacts with host KPNB1/importin beta-1 without previous binding to KPNA1/importin alpha-1. Interacts with EIF2AK2. Interacts with host nucleosome assembly protein NAP1L1; this interaction may be required for the transport of Tat within the nucleus, since the two proteins interact at the nuclear rim. Interacts with host C1QBP/SF2P32; this interaction involves lysine-acetylated Tat. Interacts with the host chemokine receptors CCR2, CCR3 and CXCR4. Interacts with host DPP4/CD26; this interaction may trigger an anti-proliferative effect. Interacts with host LDLR. Interacts with the host extracellular matrix metalloproteinase MMP1. Interacts with host PRMT6; this interaction mediates Tat's methylation. Interacts with, and is ubiquitinated by MDM2/Hdm2. Interacts with host PSMC3 and HTATIP2. Interacts with STAB1; this interaction may overcome SATB1-mediated repression of IL2 and IL2RA (interleukin) in T cells by binding to the same domain than HDAC1. Interacts (when acetylated) with human CDK13, thereby increasing HIV-1 mRNA splicing and promoting the production of the doubly spliced HIV-1 protein Nef. Interacts with host TBP; this interaction modulates the activity of transcriptional pre-initiation complex. Interacts with host RELA. Interacts with host PLSCR1; this interaction negatively regulates Tat transactivation activity by altering its subcellular distribution. Post-translationally, asymmetrical arginine methylation by host PRMT6 seems to diminish the transactivation capacity of Tat and affects the interaction with host CCNT1. In terms of processing, acetylation by EP300, CREBBP, GCN5L2/GCN5 and PCAF regulates the transactivation activity of Tat. EP300-mediated acetylation of Lys-50 promotes dissociation of Tat from the TAR RNA through the competitive binding to PCAF's bromodomain. In addition, the non-acetylated Tat's N-terminus can also interact with PCAF. PCAF-mediated acetylation of Lys-28 enhances Tat's binding to CCNT1. Lys-50 is deacetylated by SIRT1. Polyubiquitination by host MDM2 does not target Tat to degradation, but activates its transactivation function and fosters interaction with CCNT1 and TAR RNA. Post-translationally, phosphorylated by EIF2AK2 on serine and threonine residues adjacent to the basic region important for TAR RNA binding and function. Phosphorylation of Tat by EIF2AK2 is dependent on the prior activation of EIF2AK2 by dsRNA.

It localises to the host nucleus. The protein resides in the host nucleolus. It is found in the host cytoplasm. Its subcellular location is the secreted. Functionally, transcriptional activator that increases RNA Pol II processivity, thereby increasing the level of full-length viral transcripts. Recognizes a hairpin structure at the 5'-LTR of the nascent viral mRNAs referred to as the transactivation responsive RNA element (TAR) and recruits the cyclin T1-CDK9 complex (P-TEFb complex) that will in turn hyperphosphorylate the RNA polymerase II to allow efficient elongation. The CDK9 component of P-TEFb and other Tat-activated kinases hyperphosphorylate the C-terminus of RNA Pol II that becomes stabilized and much more processive. Other factors such as HTATSF1/Tat-SF1, SUPT5H/SPT5, and HTATIP2 are also important for Tat's function. Besides its effect on RNA Pol II processivity, Tat induces chromatin remodeling of proviral genes by recruiting the histone acetyltransferases (HATs) CREBBP, EP300 and PCAF to the chromatin. This also contributes to the increase in proviral transcription rate, especially when the provirus integrates in transcriptionally silent region of the host genome. To ensure maximal activation of the LTR, Tat mediates nuclear translocation of NF-kappa-B by interacting with host RELA. Through its interaction with host TBP, Tat may also modulate transcription initiation. Tat can reactivate a latently infected cell by penetrating in it and transactivating its LTR promoter. In the cytoplasm, Tat is thought to act as a translational activator of HIV-1 mRNAs. Its function is as follows. Extracellular circulating Tat can be endocytosed by surrounding uninfected cells via the binding to several surface receptors such as CD26, CXCR4, heparan sulfate proteoglycans (HSPG) or LDLR. Neurons are rarely infected, but they internalize Tat via their LDLR. Through its interaction with nuclear HATs, Tat is potentially able to control the acetylation-dependent cellular gene expression. Modulates the expression of many cellular genes involved in cell survival, proliferation or in coding for cytokines or cytokine receptors. Tat plays a role in T-cell and neurons apoptosis. Tat induced neurotoxicity and apoptosis probably contribute to neuroAIDS. Circulating Tat also acts as a chemokine-like and/or growth factor-like molecule that binds to specific receptors on the surface of the cells, affecting many cellular pathways. In the vascular system, Tat binds to ITGAV/ITGB3 and ITGA5/ITGB1 integrins dimers at the surface of endothelial cells and competes with bFGF for heparin-binding sites, leading to an excess of soluble bFGF. The chain is Protein Tat from Human immunodeficiency virus type 1 group M subtype B (isolate RF/HAT3) (HIV-1).